The following is a 23-amino-acid chain: Brevinin-1SE (23 aa).

C17 and C23 form a disulfide bridge.

In terms of tissue distribution, expressed by the skin glands.

Its subcellular location is the secreted. Functionally, mast cell degranulating peptide. Causes histamine release from rat peritoneal mast cells in vitro. Has antibacterial activity against the Gram-negative bacterium E.coli K12 and Gram-positive bacterium M.luteus NCT C2665. The protein is Brevinin-1SE of Lithobates sevosus (Dusky gopher frog).